Reading from the N-terminus, the 336-residue chain is Phosphate acyltransferase (336 aa).

It belongs to the PlsX family. In terms of assembly, homodimer. Probably interacts with PlsY.

It is found in the cytoplasm. The enzyme catalyses a fatty acyl-[ACP] + phosphate = an acyl phosphate + holo-[ACP]. It functions in the pathway lipid metabolism; phospholipid metabolism. Its function is as follows. Catalyzes the reversible formation of acyl-phosphate (acyl-PO(4)) from acyl-[acyl-carrier-protein] (acyl-ACP). This enzyme utilizes acyl-ACP as fatty acyl donor, but not acyl-CoA. This chain is Phosphate acyltransferase, found in Dictyoglomus turgidum (strain DSM 6724 / Z-1310).